The chain runs to 393 residues: Cyclic GMP-AMP synthase-like receptor 1 (393 aa).

Mg(2+) contacts are provided by glutamate 89, aspartate 91, and aspartate 205. 89–91 contributes to the ATP binding site; sequence EFD. GTP is bound by residues aspartate 205 and 251-258; that span reads RASFYEAE. Residues 255 to 258, lysine 276, and 289 to 293 contribute to the ATP site; these read YEAE and SYHIK.

The protein belongs to the mab-21 family. Requires Mg(2+) as cofactor. The cofactor is Mn(2+).

The enzyme catalyses GTP + ATP = 3',2'-cGAMP + 2 diphosphate. The catalysed reaction is GTP + ATP = pppA(2'-5')pG + diphosphate. It catalyses the reaction pppA(2'-5')pG = 3',2'-cGAMP + diphosphate. The enzyme activity is specifically activated by double-stranded RNA (dsRNA). Recognizes long dsRNA (&gt;30 bp) with no preference for 5' RNA phosphorylation. Nucleotidyltransferase that catalyzes the formation of cyclic GMP-AMP (3',2'-cGAMP) from ATP and GTP and plays a key role in innate immunity. Synthesizes 3',2'-cGAMP in a two-step reaction through production of the linear intermediate pppA(2'-5')pG. Acts as a key sensor of double-stranded RNA (dsRNA), the presence of dsRNA in the cytoplasm being a danger signal that triggers the immune responses. Directly binds dsRNA longer than 35 bp, activating the nucleotidyltransferase activity, leading to synthesis of 3',2'-cGAMP, a second messenger that binds to and activates Sting, thereby triggering the antiviral immune response via activation of the NF-kappa-B transcription factor Rel (Relish). This is Cyclic GMP-AMP synthase-like receptor 1 from Drosophila simulans (Fruit fly).